A 216-amino-acid chain; its full sequence is Probable GTP-binding protein EngB (216 aa).

One can recognise an EngB-type G domain in the interval 37–214 (GSVEIAFAGR…RAAMIRLLDE (178 aa)). GTP is bound by residues 45 to 52 (GRSNVGKS), 72 to 76 (GRTQE), 92 to 95 (DMPG), 159 to 162 (TKAD), and 193 to 195 (TSS). Mg(2+) is bound by residues Ser-52 and Thr-74.

This sequence belongs to the TRAFAC class TrmE-Era-EngA-EngB-Septin-like GTPase superfamily. EngB GTPase family. Mg(2+) is required as a cofactor.

Its function is as follows. Necessary for normal cell division and for the maintenance of normal septation. The sequence is that of Probable GTP-binding protein EngB from Rhodopseudomonas palustris (strain ATCC BAA-98 / CGA009).